Reading from the N-terminus, the 424-residue chain is Serine--tRNA ligase (424 aa).

228–230 (TAE) contributes to the L-serine binding site. 259 to 261 (RSE) is an ATP binding site. L-serine is bound at residue Glu282. 346 to 349 (EISS) contributes to the ATP binding site. Ser382 provides a ligand contact to L-serine.

This sequence belongs to the class-II aminoacyl-tRNA synthetase family. Type-1 seryl-tRNA synthetase subfamily. Homodimer. The tRNA molecule binds across the dimer.

Its subcellular location is the cytoplasm. It carries out the reaction tRNA(Ser) + L-serine + ATP = L-seryl-tRNA(Ser) + AMP + diphosphate + H(+). It catalyses the reaction tRNA(Sec) + L-serine + ATP = L-seryl-tRNA(Sec) + AMP + diphosphate + H(+). It participates in aminoacyl-tRNA biosynthesis; selenocysteinyl-tRNA(Sec) biosynthesis; L-seryl-tRNA(Sec) from L-serine and tRNA(Sec): step 1/1. Its function is as follows. Catalyzes the attachment of serine to tRNA(Ser). Is also able to aminoacylate tRNA(Sec) with serine, to form the misacylated tRNA L-seryl-tRNA(Sec), which will be further converted into selenocysteinyl-tRNA(Sec). The polypeptide is Serine--tRNA ligase (Rhodospirillum centenum (strain ATCC 51521 / SW)).